The primary structure comprises 692 residues: Elongation factor G (692 aa).

The region spanning 8 to 282 is the tr-type G domain; the sequence is ENTRNIGIMA…AVIDYLPSPL (275 aa). GTP contacts are provided by residues 17 to 24, 81 to 85, and 135 to 138; these read AHIDAGKT, DTPGH, and NKMD.

This sequence belongs to the TRAFAC class translation factor GTPase superfamily. Classic translation factor GTPase family. EF-G/EF-2 subfamily.

It is found in the cytoplasm. Functionally, catalyzes the GTP-dependent ribosomal translocation step during translation elongation. During this step, the ribosome changes from the pre-translocational (PRE) to the post-translocational (POST) state as the newly formed A-site-bound peptidyl-tRNA and P-site-bound deacylated tRNA move to the P and E sites, respectively. Catalyzes the coordinated movement of the two tRNA molecules, the mRNA and conformational changes in the ribosome. The chain is Elongation factor G from Bacillus cereus (strain ATCC 10987 / NRS 248).